A 286-amino-acid chain; its full sequence is Bark leucoagglutinin (286 aa).

The first 28 residues, 1–28, serve as a signal peptide directing secretion; sequence ATSNSKPTQVLLATFLTFFFLLLNNVNS. Tyrosine 73 is a binding site for N-acetyl-alpha-neuraminyl-(2-&gt;3)-beta-D-galactosyl-(1-&gt;4)-beta-D-glucose. The N-linked (GlcNAc...) asparagine glycan is linked to asparagine 89. N-acetyl-alpha-neuraminyl-(2-&gt;3)-beta-D-galactosyl-(1-&gt;4)-beta-D-glucose contacts are provided by aspartate 115 and lysine 135. Residue asparagine 141 is glycosylated (N-linked (GlcNAc...) asparagine). Residues glutamate 155 and aspartate 157 each coordinate Mn(2+). Ca(2+) is bound by residues aspartate 157, tyrosine 159, aspartate 165, and aspartate 168. 2 residues coordinate N-acetyl-alpha-neuraminyl-(2-&gt;3)-beta-D-galactosyl-(1-&gt;4)-beta-D-glucose: tyrosine 159 and aspartate 165. The Mn(2+) site is built by aspartate 168 and histidine 173. Residues asparagine 207 and asparagine 219 are each glycosylated (N-linked (GlcNAc...) asparagine). Positions 278–286 are cleaved as a propeptide — removed in mature form; the sequence is NVHIARYTA.

Belongs to the leguminous lectin family.

Its function is as follows. Sialic acid-binding lectin specifically recognizing the trisaccharide sequence Neu5Ac/Gc-alpha-2,3-Gal-beta-1,4-GlcNAc/Glc. The polypeptide is Bark leucoagglutinin (Maackia amurensis (Amur maackia)).